A 91-amino-acid polypeptide reads, in one-letter code: Small ribosomal subunit protein uS15c (91 aa).

This sequence belongs to the universal ribosomal protein uS15 family. Part of the 30S ribosomal subunit.

It localises to the plastid. The protein localises to the chloroplast. The protein is Small ribosomal subunit protein uS15c (rps15) of Phalaenopsis aphrodite subsp. formosana (Moth orchid).